The primary structure comprises 119 residues: Large ribosomal subunit protein bL20 (119 aa).

It belongs to the bacterial ribosomal protein bL20 family.

Its function is as follows. Binds directly to 23S ribosomal RNA and is necessary for the in vitro assembly process of the 50S ribosomal subunit. It is not involved in the protein synthesizing functions of that subunit. The sequence is that of Large ribosomal subunit protein bL20 from Rhodopseudomonas palustris (strain BisB18).